The following is a 656-amino-acid chain: Chaperone protein DnaK (656 aa).

Residues 590 to 605 (GGAAGGAAGGAAGGAA) are compositionally biased toward gly residues. The disordered stretch occupies residues 590–656 (GGAAGGAAGG…DGQPKPGPAA (67 aa)). The segment covering 606-621 (GDAAGAAGDSTGDAAG) has biased composition (low complexity). Positions 622–635 (AAGGPSEGPAGDAG) are enriched in gly residues.

It belongs to the heat shock protein 70 family.

Its function is as follows. Acts as a chaperone. This Cenarchaeum symbiosum (strain A) protein is Chaperone protein DnaK.